Consider the following 118-residue polypeptide: Large ribosomal subunit protein bL20 (118 aa).

Belongs to the bacterial ribosomal protein bL20 family.

Its function is as follows. Binds directly to 23S ribosomal RNA and is necessary for the in vitro assembly process of the 50S ribosomal subunit. It is not involved in the protein synthesizing functions of that subunit. This is Large ribosomal subunit protein bL20 from Staphylococcus saprophyticus subsp. saprophyticus (strain ATCC 15305 / DSM 20229 / NCIMB 8711 / NCTC 7292 / S-41).